The chain runs to 214 residues: Cytochrome c biogenesis ATP-binding export protein CcmA (214 aa).

The region spanning 12–214 (LAAHALAFSR…TRMLTLEAAA (203 aa)) is the ABC transporter domain. ATP is bound at residue 44-51 (GDNGAGKT).

Belongs to the ABC transporter superfamily. CcmA exporter (TC 3.A.1.107) family. In terms of assembly, the complex is composed of two ATP-binding proteins (CcmA) and two transmembrane proteins (CcmB).

The protein resides in the cell inner membrane. It catalyses the reaction heme b(in) + ATP + H2O = heme b(out) + ADP + phosphate + H(+). Its function is as follows. Part of the ABC transporter complex CcmAB involved in the biogenesis of c-type cytochromes; once thought to export heme, this seems not to be the case, but its exact role is uncertain. Responsible for energy coupling to the transport system. The polypeptide is Cytochrome c biogenesis ATP-binding export protein CcmA (Xanthomonas oryzae pv. oryzae (strain MAFF 311018)).